Here is a 444-residue protein sequence, read N- to C-terminus: Exodeoxyribonuclease 7 large subunit (444 aa).

This sequence belongs to the XseA family. Heterooligomer composed of large and small subunits.

The protein resides in the cytoplasm. It catalyses the reaction Exonucleolytic cleavage in either 5'- to 3'- or 3'- to 5'-direction to yield nucleoside 5'-phosphates.. Functionally, bidirectionally degrades single-stranded DNA into large acid-insoluble oligonucleotides, which are then degraded further into small acid-soluble oligonucleotides. This chain is Exodeoxyribonuclease 7 large subunit, found in Xylella fastidiosa (strain 9a5c).